Reading from the N-terminus, the 125-residue chain is 14 kDa phosphohistidine phosphatase (125 aa).

Alanine 2 bears the N-acetylalanine mark. Lysine 21 contributes to the substrate binding site. The Proton acceptor role is filled by histidine 53. 94–96 contacts substrate; the sequence is SMA.

It belongs to the janus family. As to quaternary structure, monomer. In terms of tissue distribution, expressed abundantly in heart and skeletal muscle.

The protein resides in the cytoplasm. It carries out the reaction N(pros)-phospho-L-histidyl-[protein] + H2O = L-histidyl-[protein] + phosphate. The catalysed reaction is N(tele)-phospho-L-histidyl-[protein] + H2O = L-histidyl-[protein] + phosphate. Its function is as follows. Exhibits phosphohistidine phosphatase activity. This Homo sapiens (Human) protein is 14 kDa phosphohistidine phosphatase (PHPT1).